The chain runs to 93 residues: U8-theraphotoxin-Hs1b (93 aa).

The signal sequence occupies residues 1–18; it reads MKAILLLAIFSVLTVAIC. Disulfide bonds link Cys-40/Cys-54, Cys-40/Cys-81, Cys-53/Cys-66, and Cys-84/Cys-91.

The protein belongs to the neurotoxin 27 (Jztx-72) family. ICK-72 subfamily. Expressed by the venom gland.

The protein resides in the secreted. Probable neurotoxin with ion channel impairing activity. This is U8-theraphotoxin-Hs1b from Cyriopagopus schmidti (Chinese bird spider).